A 648-amino-acid chain; its full sequence is Biosynthetic arginine decarboxylase (648 aa).

Lysine 109 bears the N6-(pyridoxal phosphate)lysine mark. A substrate-binding site is contributed by 291–301; sequence IDVGGGLGIDF.

This sequence belongs to the Orn/Lys/Arg decarboxylase class-II family. SpeA subfamily. The cofactor is Mg(2+). Pyridoxal 5'-phosphate is required as a cofactor.

It carries out the reaction L-arginine + H(+) = agmatine + CO2. It participates in amine and polyamine biosynthesis; agmatine biosynthesis; agmatine from L-arginine: step 1/1. Its function is as follows. Catalyzes the biosynthesis of agmatine from arginine. This Prochlorococcus marinus (strain MIT 9515) protein is Biosynthetic arginine decarboxylase.